The chain runs to 251 residues: uncharacterized protein (251 aa).

12 to 36 lines the NADP(+) pocket; it reads VVTGASSGIGEATARTLAAQGFHVV. Ser136 contributes to the substrate binding site. Tyr149 serves as the catalytic Proton acceptor.

This sequence belongs to the short-chain dehydrogenases/reductases (SDR) family.

This is an uncharacterized protein from Mycobacterium tuberculosis (strain CDC 1551 / Oshkosh).